The chain runs to 119 residues: Large ribosomal subunit protein bL20 (119 aa).

The protein belongs to the bacterial ribosomal protein bL20 family.

Functionally, binds directly to 23S ribosomal RNA and is necessary for the in vitro assembly process of the 50S ribosomal subunit. It is not involved in the protein synthesizing functions of that subunit. This chain is Large ribosomal subunit protein bL20, found in Streptococcus uberis (strain ATCC BAA-854 / 0140J).